Consider the following 372-residue polypeptide: MNLSEIGYRRVVVKLGTSVLTSGSRQLDKAHMVELARQMAALMKAGVEVVLCTSGAIAAGREHLGYPELPDTVANKQLLAAVGQSQLILAWAQLFSIYGLHVGQLLLTRADLHDRERYLNARDSLNALLAQGIIPIINENDAVATNEIKVGDNDNLSARAALLCDADLLILLTDQRGLFDADPRSNPDAKLIKQVVNIDDSLRLLAGGAVSGLGTGGMATKLEAADIARRAGVEVIIASGHHPRVIQDAVCKESVGTHFTALENPLESRKQWILAGQATRGKLILDQGALNAVTQKGRSLLSKGIVRVEGKFERGATLHLVDSDGREFARGMSRYSAKDLHLIAGKHSDDIESLLGYDYGDAVVHRNDMVVL.

Lys-14 provides a ligand contact to ATP. Substrate is bound by residues Ser-54, Asp-141, and Asn-153. ATP contacts are provided by residues 173–174 (TD) and 215–221 (TGGMATK). Residues 280-358 (RGKLILDQGA…DDIESLLGYD (79 aa)) form the PUA domain.

It belongs to the glutamate 5-kinase family.

Its subcellular location is the cytoplasm. It catalyses the reaction L-glutamate + ATP = L-glutamyl 5-phosphate + ADP. The protein operates within amino-acid biosynthesis; L-proline biosynthesis; L-glutamate 5-semialdehyde from L-glutamate: step 1/2. In terms of biological role, catalyzes the transfer of a phosphate group to glutamate to form L-glutamate 5-phosphate. The chain is Glutamate 5-kinase from Shewanella sediminis (strain HAW-EB3).